A 261-amino-acid chain; its full sequence is Ribonuclease PH (261 aa).

Phosphate is bound by residues Arg-87 and 125 to 127; that span reads GTR.

It belongs to the RNase PH family. In terms of assembly, homohexameric ring arranged as a trimer of dimers.

The catalysed reaction is tRNA(n+1) + phosphate = tRNA(n) + a ribonucleoside 5'-diphosphate. Phosphorolytic 3'-5' exoribonuclease that plays an important role in tRNA 3'-end maturation. Removes nucleotide residues following the 3'-CCA terminus of tRNAs; can also add nucleotides to the ends of RNA molecules by using nucleoside diphosphates as substrates, but this may not be physiologically important. Probably plays a role in initiation of 16S rRNA degradation (leading to ribosome degradation) during starvation. The sequence is that of Ribonuclease PH from Desulforudis audaxviator (strain MP104C).